A 362-amino-acid chain; its full sequence is Dihydroorotate dehydrogenase (quinone) (362 aa).

Residues 62–66 and Thr-86 each bind FMN; that span reads AGYDK. Residue Lys-66 coordinates substrate. Residue 111–115 coordinates substrate; the sequence is NRLGF. FMN is bound by residues Asn-139 and Asn-170. A substrate-binding site is contributed by Asn-170. Ser-173 acts as the Nucleophile in catalysis. Residue Asn-175 coordinates substrate. 2 residues coordinate FMN: Lys-215 and Ser-243. 244-245 is a substrate binding site; sequence NT. Residues Gly-266, Gly-295, and 316–317 each bind FMN; that span reads YS.

The protein belongs to the dihydroorotate dehydrogenase family. Type 2 subfamily. Monomer. Requires FMN as cofactor.

The protein localises to the cell membrane. The enzyme catalyses (S)-dihydroorotate + a quinone = orotate + a quinol. It participates in pyrimidine metabolism; UMP biosynthesis via de novo pathway; orotate from (S)-dihydroorotate (quinone route): step 1/1. Catalyzes the conversion of dihydroorotate to orotate with quinone as electron acceptor. This is Dihydroorotate dehydrogenase (quinone) from Sinorhizobium medicae (strain WSM419) (Ensifer medicae).